We begin with the raw amino-acid sequence, 191 residues long: GDP-mannose pyrophosphatase (191 aa).

GDP-alpha-D-mannose is bound by residues Y17, 38–40, R67, and 85–87; these read KRE and AGL. The 138-residue stretch at 43–180 folds into the Nudix hydrolase domain; it reads DRGNGATILL…EIRDGKTVLL (138 aa). The Mg(2+) site is built by A85, E100, and E104. Positions 86–106 match the Nudix box motif; the sequence is GLLDNDEPEVCIRKEAIEETG. Residues E104, E127, 150–151, and K176 each bind GDP-alpha-D-mannose; that span reads DE. Residue E151 participates in Mg(2+) binding.

The protein belongs to the Nudix hydrolase family. NudK subfamily. Homodimer. The cofactor is Mg(2+).

The enzyme catalyses GDP-alpha-D-mannose + H2O = alpha-D-mannose 1-phosphate + GMP + 2 H(+). Its function is as follows. Nucleoside diphosphate sugar hydrolase that hydrolyzes GDP-mannose as its preferred substrate, yielding GMP and mannose-1-phosphate. The protein is GDP-mannose pyrophosphatase (nudK) of Escherichia coli (strain K12 / DH10B).